The chain runs to 499 residues: Cytochrome P450 81E8 (499 aa).

Residues 3-23 (TFYLSLIISLFFLIITLKVFF) form a helical membrane-spanning segment. Cysteine 436 is a heme binding site.

This sequence belongs to the cytochrome P450 family. Heme is required as a cofactor.

The protein resides in the membrane. Its function is as follows. Probable monooxygenases exhibiting no activity with isoflavones such as formononetin, biochanin A, pseudobaptigenin, daidzein, genistein, isoformononetin and prunetin, or with flavonoids including naringenin, liquiritigenin, apigenin, luteolin, or kaempferol. The protein is Cytochrome P450 81E8 of Medicago truncatula (Barrel medic).